Here is a 500-residue protein sequence, read N- to C-terminus: NAD(P)H-quinone oxidoreductase chain 4, chloroplastic (500 aa).

The next 14 helical transmembrane spans lie at 4–24 (FPWL…IFLL), 37–57 (LCIC…HFQL), 87–107 (IGPI…AWPV), 111–131 (AQLF…SFSS), 134–154 (LLLF…LLSM), 167–187 (FILY…GIGL), 208–228 (ALEV…LPII), 242–262 (HYST…YGLV), 272–292 (AHCL…IYAA), 305–325 (IAYS…SLSD), 330–350 (GAIL…FLAG), 386–406 (LALP…GIIT), 416–436 (ILIA…SLSM), and 462–482 (LFVS…PDFV).

It belongs to the complex I subunit 4 family.

It localises to the plastid. It is found in the chloroplast thylakoid membrane. The enzyme catalyses a plastoquinone + NADH + (n+1) H(+)(in) = a plastoquinol + NAD(+) + n H(+)(out). The catalysed reaction is a plastoquinone + NADPH + (n+1) H(+)(in) = a plastoquinol + NADP(+) + n H(+)(out). This Oenothera biennis (German evening primrose) protein is NAD(P)H-quinone oxidoreductase chain 4, chloroplastic.